The primary structure comprises 38 residues: Large ribosomal subunit protein bL36 (38 aa).

The protein belongs to the bacterial ribosomal protein bL36 family.

The sequence is that of Large ribosomal subunit protein bL36 from Ralstonia nicotianae (strain ATCC BAA-1114 / GMI1000) (Ralstonia solanacearum).